The primary structure comprises 292 residues: uncharacterized protein (292 aa).

A signal peptide spans 1-21 (MNSNSNKKRDPARFPAGVAQG). Positions 1–30 (MNSNSNKKRDPARFPAGVAQGCSTTRAGDL) are disordered.

This is an uncharacterized protein from Treponema pallidum (strain Nichols).